We begin with the raw amino-acid sequence, 380 residues long: Lipid-A-disaccharide synthase (380 aa).

It belongs to the LpxB family.

It catalyses the reaction a lipid X + a UDP-2-N,3-O-bis[(3R)-3-hydroxyacyl]-alpha-D-glucosamine = a lipid A disaccharide + UDP + H(+). It functions in the pathway bacterial outer membrane biogenesis; LPS lipid A biosynthesis. Its function is as follows. Condensation of UDP-2,3-diacylglucosamine and 2,3-diacylglucosamine-1-phosphate to form lipid A disaccharide, a precursor of lipid A, a phosphorylated glycolipid that anchors the lipopolysaccharide to the outer membrane of the cell. This Pseudomonas syringae pv. tomato (strain ATCC BAA-871 / DC3000) protein is Lipid-A-disaccharide synthase.